We begin with the raw amino-acid sequence, 601 residues long: Dual specificity tyrosine-phosphorylation-regulated kinase 2 (601 aa).

The segment at 1–24 is disordered; sequence MLTRKPSAAAPAAYPTGRGGDSAV. At Ser30 the chain carries Phosphoserine. At Thr106 the chain carries Phosphothreonine; by ATM. The short motif at 189 to 191 is the Nuclear localization signal element; that stretch reads KKR. The Protein kinase domain maps to 222–535; that stretch reads YEVLKVIGKG…PGQALRHPWL (314 aa). Residues 228–236, Lys251, and 301–304 contribute to the ATP site; these read IGKGSFGQV and FELL. Residue Asp348 is the Proton acceptor of the active site. Position 381 is a phosphothreonine; by MAP3K10 (Thr381). Phosphotyrosine; by autocatalysis is present on Tyr382. Ser442 is subject to Phosphoserine; by ATM. Ser449 is modified (phosphoserine; by MAP3K10).

Belongs to the protein kinase superfamily. CMGC Ser/Thr protein kinase family. MNB/DYRK subfamily. Component of an E3 ligase complex containing DYRK2, EDD/UBR5, DDB1 and DCAF1 (EDVP complex). Interacts directly with EDD/UBR5, DDB1 and DCAF1. Interacts with SIAH2 and MDM2. Interacts with MAP3K10 and NFATC1. May also interact with CCNL2. The cofactor is Mg(2+). Mn(2+) serves as cofactor. In terms of processing, autophosphorylates cotranslationally on the second tyrosine residue in the Tyr-X-Tyr motif in the activation loop, but once mature, does not have any protein tyrosine kinase activity. Phosphorylated at Thr-106 and Ser-442 by ATM in response to genotoxic stress. Under normal conditions, polyubiquitinated in the nucleus by MDM2, leading to its proteasomal degradation. Phosphorylation on Thr-106 and Ser-442 by ATM in response to genotoxic stress disrupts MDM2 binding and prevents MDM2-mediated ubiquitination and subsequent proteasomal degradation. Polyubiquitinated by SIAH2, leading to its proteasomal degradation. Polyubiquitinated by SIAH2 occurs under normal conditions, and is enhanced in response to hypoxia. In terms of tissue distribution, testis, after the onset of spermatogenesis.

The protein resides in the cytoplasm. Its subcellular location is the nucleus. The enzyme catalyses L-seryl-[protein] + ATP = O-phospho-L-seryl-[protein] + ADP + H(+). It carries out the reaction L-threonyl-[protein] + ATP = O-phospho-L-threonyl-[protein] + ADP + H(+). The catalysed reaction is L-tyrosyl-[protein] + ATP = O-phospho-L-tyrosyl-[protein] + ADP + H(+). With respect to regulation, activated by autophosphorylation on the second tyrosine residue in the Tyr-X-Tyr motif in the activation loop. Inhibited by acridine analogs, purvalanol, and barely by harmine. Inhibited by leucettine and leucettine derivatives. In terms of biological role, serine/threonine-protein kinase involved in the regulation of the mitotic cell cycle, cell proliferation, apoptosis, organization of the cytoskeleton and neurite outgrowth. Functions in part via its role in ubiquitin-dependent proteasomal protein degradation. Functions downstream of ATM and phosphorylates p53/TP53 at 'Ser-46', and thereby contributes to the induction of apoptosis in response to DNA damage. Phosphorylates NFATC1, and thereby inhibits its accumulation in the nucleus and its transcription factor activity. Phosphorylates EIF2B5 at 'Ser-544', enabling its subsequent phosphorylation and inhibition by GSK3B. Likewise, phosphorylation of NFATC1, CRMP2/DPYSL2 and CRMP4/DPYSL3 promotes their subsequent phosphorylation by GSK3B. May play a general role in the priming of GSK3 substrates. Inactivates GYS1 by phosphorylation at 'Ser-641', and potentially also a second phosphorylation site, thus regulating glycogen synthesis. Mediates EDVP E3 ligase complex formation and is required for the phosphorylation and subsequent degradation of KATNA1. Phosphorylates TERT at 'Ser-457', promoting TERT ubiquitination by the EDVP complex. Phosphorylates SIAH2, and thereby increases its ubiquitin ligase activity. Promotes the proteasomal degradation of MYC and JUN, and thereby regulates progress through the mitotic cell cycle and cell proliferation. Promotes proteasomal degradation of GLI2 and GLI3, and thereby plays a role in smoothened and sonic hedgehog signaling. Plays a role in cytoskeleton organization and neurite outgrowth via its phosphorylation of DCX and DPYSL2. Phosphorylates CRMP2/DPYSL2, CRMP4/DPYSL3, DCX, EIF2B5, EIF4EBP1, GLI2, GLI3, GYS1, JUN, MDM2, MYC, NFATC1, p53/TP53, TAU/MAPT and KATNA1. Can phosphorylate histone H1, histone H3 and histone H2B (in vitro). Can phosphorylate CARHSP1 (in vitro). In Homo sapiens (Human), this protein is Dual specificity tyrosine-phosphorylation-regulated kinase 2 (DYRK2).